The sequence spans 522 residues: Glycoprotein (522 aa).

The first 25 residues, 1-25 (MSQLNLIPFFCVIIVLSVEDFPLYT), serve as a signal peptide directing secretion. Over 26 to 455 (IPEKIGPWTP…VSDVDLGLPD (430 aa)) the chain is Virion surface. A helical membrane pass occupies residues 456–476 (WSLYALIGATIIAFFILICLI). At 477-522 (RICCKKGGRRNSPTNRPDLPIGLSTTPQPKSKVISSWESYKGTSNV) the chain is on the intravirion side. Cys480 is lipidated: S-palmitoyl cysteine; by host.

The protein belongs to the lyssavirus glycoprotein family. In terms of assembly, homotrimer. Interacts with matrix protein. Post-translationally, glycosylated and palmitoylated by host. Glycosylation is crucial for glycoprotein export at the cell surface.

Its subcellular location is the virion membrane. Attaches the virus to host cellular receptor, inducing endocytosis of the virion. In the endosome, the acidic pH induces conformational changes in the glycoprotein trimer, which trigger fusion between virus and cell membrane. The chain is Glycoprotein (G) from Homo sapiens (Human).